We begin with the raw amino-acid sequence, 186 residues long: Peptidyl-tRNA hydrolase (186 aa).

Tyr-14 is a binding site for tRNA. His-19 serves as the catalytic Proton acceptor. Residues Phe-64, Asn-66, and Asn-112 each coordinate tRNA.

This sequence belongs to the PTH family. Monomer.

The protein resides in the cytoplasm. The catalysed reaction is an N-acyl-L-alpha-aminoacyl-tRNA + H2O = an N-acyl-L-amino acid + a tRNA + H(+). Its function is as follows. Hydrolyzes ribosome-free peptidyl-tRNAs (with 1 or more amino acids incorporated), which drop off the ribosome during protein synthesis, or as a result of ribosome stalling. In terms of biological role, catalyzes the release of premature peptidyl moieties from peptidyl-tRNA molecules trapped in stalled 50S ribosomal subunits, and thus maintains levels of free tRNAs and 50S ribosomes. The protein is Peptidyl-tRNA hydrolase of Listeria monocytogenes serovar 1/2a (strain ATCC BAA-679 / EGD-e).